Here is a 315-residue protein sequence, read N- to C-terminus: ADP/ATP translocase 4 (315 aa).

Topologically, residues 1-19 (MHREPPKKKAEKRLFDASS) are mitochondrial intermembrane. The stretch at 18–110 (SSFGKDLLAG…FAFKDKYKQL (93 aa)) is one Solcar 1 repeat. Residues 20–49 (FGKDLLAGGVAAAVSKTAVAPIERVKLLLQ) form a helical membrane-spanning segment. The Mitochondrial matrix segment spans residues 50–86 (VQASSKQISPEARYKGMVDCLVRIPREQGFFSFWRGN). A helical membrane pass occupies residues 87 to 111 (LANVIRYFPTQALNFAFKDKYKQLF). 2 residues coordinate ADP: Arg92 and Lys104. Topologically, residues 112–121 (MSGVNKEKQF) are mitochondrial intermembrane. The helical transmembrane segment at 122 to 142 (WRWFLANLASGGAAGATSLCV) threads the bilayer. Solcar repeat units follow at residues 123–213 (RWFL…VKGL) and 220–307 (TPFL…IKEF). Residues 143 to 190 (VYPLDFARTRLGVDIGKGPEERQFKGLGDCIMKIAKSDGIAGLYQGFG) are Mitochondrial matrix-facing. The chain crosses the membrane as a helical span at residues 191–211 (VSVQGIIVYRASYFGAYDTVK). Residues 212–222 (GLLPKPKKTPF) lie on the Mitochondrial intermembrane side of the membrane. Residues 223–243 (LVSFFIAQVVTTCSGILSYPF) form a helical membrane-spanning segment. The Mitochondrial matrix segment spans residues 244–283 (DTVRRRMMMQSGEAKRQYKGTLDCFVKIYQHEGINSFFRG). Position 247 (Arg247) interacts with ADP. Residues 247–252 (RRRMMM) are important for transport activity. Residues 247–252 (RRRMMM) carry the Nucleotide carrier signature motif motif. A helical membrane pass occupies residues 284–301 (AFSNVLRGTGGALVLVLY). The Mitochondrial intermembrane portion of the chain corresponds to 302-315 (DKIKEFFHIDIGGR).

This sequence belongs to the mitochondrial carrier (TC 2.A.29) family. As to quaternary structure, monomer.

It is found in the mitochondrion inner membrane. Its subcellular location is the membrane. The protein localises to the cell projection. The protein resides in the cilium. It localises to the flagellum membrane. The enzyme catalyses ADP(in) + ATP(out) = ADP(out) + ATP(in). It catalyses the reaction dATP(out) + ADP(in) = dATP(in) + ADP(out). The catalysed reaction is dADP(in) + ADP(out) = dADP(out) + ADP(in). It carries out the reaction H(+)(in) = H(+)(out). Its activity is regulated as follows. The matrix-open state (m-state) is inhibited by the membrane-permeable bongkrekic acid (BKA). The cytoplasmic-open state (c-state) is inhibited by the membrane-impermeable toxic inhibitor carboxyatractyloside (CATR). Proton transporter activity is inhibited by ADP:ATP antiporter activity. In terms of biological role, ADP:ATP antiporter that mediates import of ADP into the mitochondrial matrix for ATP synthesis, and export of ATP out to fuel the cell. Cycles between the cytoplasmic-open state (c-state) and the matrix-open state (m-state): operates by the alternating access mechanism with a single substrate-binding site intermittently exposed to either the cytosolic (c-state) or matrix (m-state) side of the inner mitochondrial membrane. Specifically required during spermatogenesis, probably to mediate ADP:ATP exchange in spermatocytes. Large ATP supplies from mitochondria may be critical for normal progression of spermatogenesis during early stages of meiotic prophase I, including DNA double-strand break repair and chromosomal synapsis. In addition to its ADP:ATP antiporter activity, also involved in mitochondrial uncoupling and mitochondrial permeability transition pore (mPTP) activity. Plays a role in mitochondrial uncoupling by acting as a proton transporter: proton transport uncouples the proton flows via the electron transport chain and ATP synthase to reduce the efficiency of ATP production and cause mitochondrial thermogenesis. Proton transporter activity is inhibited by ADP:ATP antiporter activity, suggesting that SLC25A31/ANT4 acts as a master regulator of mitochondrial energy output by maintaining a delicate balance between ATP production (ADP:ATP antiporter activity) and thermogenesis (proton transporter activity). Proton transporter activity requires free fatty acids as cofactor, but does not transport it. Among nucleotides, may also exchange ADP for dATP and dADP. Also plays a key role in mPTP opening, a non-specific pore that enables free passage of the mitochondrial membranes to solutes of up to 1.5 kDa, and which contributes to cell death. It is however unclear if SLC25A31/ANT4 constitutes a pore-forming component of mPTP or regulates it. The protein is ADP/ATP translocase 4 of Macaca fascicularis (Crab-eating macaque).